A 1374-amino-acid chain; its full sequence is Mitogen-activated protein kinase kinase kinase 5 (1374 aa).

The tract at residues 68–87 (PAATSSSSATRGRGSSVGGG) is disordered. Over residues 69–81 (AATSSSSATRGRG) the composition is skewed to low complexity. R78 and R80 each carry asymmetric dimethylarginine; by PRMT1. Phosphoserine; by PIM1 and PKB/AKT1 is present on S83. Positions 649–1374 (MVNTITEEKG…AIIDFRNKQT (726 aa)) are interaction with PPIA/CYPA. A Protein kinase domain is found at 680 to 938 (NGDRVVLGKG…ANDLLVDEFL (259 aa)). Residues 686-694 (LGKGTYGIV) and K709 each bind ATP. The residue at position 718 (Y718) is a Phosphotyrosine. The active-site Proton acceptor is the D803. Position 813 is a phosphothreonine; by autocatalysis (T813). Residue T838 is modified to Phosphothreonine; by autocatalysis, MELK and MAP3K6. T842 is subject to Phosphothreonine; by autocatalysis. A Phosphoserine modification is found at S958. Position 966 is a phosphoserine; by autocatalysis (S966). S1029 and S1033 each carry phosphoserine. Positions 1182 to 1209 (SESDTADQEDLDVEDDHEEQPSNQTVRR) are disordered. Over residues 1185 to 1199 (DTADQEDLDVEDDHE) the composition is skewed to acidic residues. Residues 1245 to 1285 (LGRMKIETNRLLEELVRKEKELQALLHRAIEEKDQEIKHLK) adopt a coiled-coil conformation.

It belongs to the protein kinase superfamily. STE Ser/Thr protein kinase family. MAP kinase kinase kinase subfamily. In terms of assembly, homodimer when inactive. Binds both upstream activators and downstream substrates in multimolecular complexes. Part of a cytoplasmic complex made of HIPK1, DAB2IP and MAP3K5 in response to TNF. This complex formation promotes MAP3K5-JNK activation and subsequent apoptosis. Interacts with SOCS1 which recognizes phosphorylation of Tyr-718 and induces MAP3K5/ASK1 degradation in endothelial cells. Interacts with the 14-3-3 family proteins such as YWHAB, YWHAE, YWHAQ, YWHAH, YWHAZ and SFN. Interacts with ARRB2, BIRC2, DAB2IP, IGF1R, MAP3K6/ASK2, PGAM5, PIM1, PPP5C, SOCS1, STUB1, TRAF2, TRAF6 and TXN. Interacts with ERN1 in a TRAF2-dependent manner. Interacts with calcineurin subunit PPP3R1. Interacts with PPM1L. Interacts (via N-terminus) with RAF1 and this interaction inhibits the proapoptotic function of MAP3K5. Interacts with DAB2IP (via N-terminus C2 domain); the interaction occurs in a TNF-alpha-dependent manner. Interacts with DUSP13A; may positively regulate apoptosis. Interacts with DAXX. Interacts with RC3H2. Interacts with PPIA/CYPA. Interacts with PRMT1; the interaction results in MAP3K5 methylation by PRMT1 which inhibits MAP3K5 activation. Interacts with TRAF2; the interaction is inhibited by PRMT1. Interacts with TRIM48. (Microbial infection) Interacts with HIV-1 Nef; this interaction inhibits MAP3K5 signaling. The cofactor is Mg(2+). In terms of processing, phosphorylated at Thr-838 through autophosphorylation and by MAP3K6/ASK2 which leads to activation. Thr-838 is dephosphorylated by PPP5C. Ser-83 and Ser-1033 are inactivating phosphorylation sites, the former of which is phosphorylated by AKT1. Phosphorylated at Ser-966 which induces association of MAP3K5/ASK1 with the 14-3-3 family proteins and suppresses MAP3K5/ASK1 activity. Calcineurin (CN) dephosphorylates this site. Also dephosphorylated and activated by PGAM5. Phosphorylation at Ser-966 in response to oxidative stress is negatively regulated by PPIA/CYPA. Ubiquitinated. Tumor necrosis factor (TNF) induces TNFR2-dependent ubiquitination, leading to proteasomal degradation. Ubiquitinated by RC3H2 in a TRIM48-dependent manner. Post-translationally, methylation at Arg-78 and Arg-80 by PRMT1 promotes association of MAP3K5 with thioredoxin and negatively regulates MAP3K5 association with TRAF2, inhibiting MAP3K5 activation. Methylation is blocked by ubiquitination of PRMT1 by TRIM48. As to expression, abundantly expressed in heart and pancreas.

It localises to the cytoplasm. The protein resides in the endoplasmic reticulum. It catalyses the reaction L-seryl-[protein] + ATP = O-phospho-L-seryl-[protein] + ADP + H(+). It carries out the reaction L-threonyl-[protein] + ATP = O-phospho-L-threonyl-[protein] + ADP + H(+). Activated by various stressors, including oxidative stress, endoplasmic reticulum stress, and calcium overload, as well as by receptor-mediated inflammatory signals, such as the tumor necrosis factor (TNF) and lipopolysaccharide (LPS). Homophilic association of MAP3K5/ASK1 through the C-terminal coiled-coil domains and the heteromeric complex formation of MAP3K5/ASK1 with the reduced form of thioredoxin (TXN), constitutes an inactive form of the kinase. Upon ROS-induced dissociation of TXN from MAP3K5/ASK1, TRAF2 and TRAF6 are reciprocally recruited to MAP3K5/ASK1 and form the active MAP3K5/ASK1 signalosome, in which TRAF2 and TRAF6 appear to facilitate the active configuration of MAP3K5/ASK1. MAP3K5/ASK1 activity is also regulated through several phosphorylation and dephosphorylation events. Thr-838 is an activating phosphorylation site that is autophosphorylated and phosphorylated by MAP3K6/ASK2 and dephosphorylated by PPP5C. Ser-83 and Ser-1033 are inactivating phosphorylation sites, the former of which is phosphorylated by AKT1. Phosphorylation of Ser-966 induces association of MAP3K5/ASK1 with the 14-3-3 family proteins, which suppresses MAP3K5/ASK1 activity. Calcium/calmodulin-activated protein phosphatase calcineurin (PPP3CA) has been shown to directly dephosphorylate this site. SOCS1 binds to ASK1 by recognizing phosphorylation of Tyr-718 and induces MAP3K5/ASK1 degradation in endothelial cells. Also dephosphorylated and activated by PGAM5. Contains an N-terminal autoinhibitory domain. Once activated targeted for proteasomal degradation by RC3H2-mediated ubiquitination. In terms of biological role, serine/threonine kinase which acts as an essential component of the MAP kinase signal transduction pathway. Plays an important role in the cascades of cellular responses evoked by changes in the environment. Mediates signaling for determination of cell fate such as differentiation and survival. Plays a crucial role in the apoptosis signal transduction pathway through mitochondria-dependent caspase activation. MAP3K5/ASK1 is required for the innate immune response, which is essential for host defense against a wide range of pathogens. Mediates signal transduction of various stressors like oxidative stress as well as by receptor-mediated inflammatory signals, such as the tumor necrosis factor (TNF) or lipopolysaccharide (LPS). Once activated, acts as an upstream activator of the MKK/JNK signal transduction cascade and the p38 MAPK signal transduction cascade through the phosphorylation and activation of several MAP kinase kinases like MAP2K4/SEK1, MAP2K3/MKK3, MAP2K6/MKK6 and MAP2K7/MKK7. These MAP2Ks in turn activate p38 MAPKs and c-jun N-terminal kinases (JNKs). Both p38 MAPK and JNKs control the transcription factors activator protein-1 (AP-1). In Homo sapiens (Human), this protein is Mitogen-activated protein kinase kinase kinase 5 (MAP3K5).